A 222-amino-acid polypeptide reads, in one-letter code: Uridine diphosphate glucose pyrophosphatase NUDT14 (222 aa).

Residues 38 to 206 enclose the Nudix hydrolase domain; the sequence is KTHDSVTILM…DVPKTLGVIF (169 aa). A Nudix box motif is present at residues 111-129; it reads PGLSLEEVACKEAWEECGY.

The protein belongs to the Nudix hydrolase family. As to quaternary structure, homodimer. The cofactor is Mg(2+).

The protein resides in the cytoplasm. It catalyses the reaction UDP-sugar + H2O = UMP + alpha-D-aldose 1-phosphate.. Hydrolyzes UDP-glucose to glucose 1-phosphate and UMP and ADP-ribose to ribose 5-phosphate and AMP. The physiological substrate is probably UDP-glucose. Poor activity on other substrates such as ADP-glucose, CDP-glucose, GDP-glucose and GDP-mannose. The protein is Uridine diphosphate glucose pyrophosphatase NUDT14 (NUDT14) of Bos taurus (Bovine).